Here is a 340-residue protein sequence, read N- to C-terminus: Spike protein P5 (340 aa).

Residues 2–122 are domain-1; it reads ANQQIGGSTV…NFPIALGVWP (121 aa). The Collagen-like domain maps to 123–141; it reads SGIKGDKGDPGAPGPAGGT. Positions 142–340 are domain-2; that stretch reads VVVEDSGASF…IINITAAKIN (199 aa).

As to quaternary structure, homotrimer.

It localises to the virion. Functionally, in association with P31 and P2, forms the spike complexes located at the 5-fold vertices of the capsid. Essential for viral infectivity. The chain is Spike protein P5 (V) from Enterobacteria phage PRD1 (Bacteriophage PRD1).